Here is a 143-residue protein sequence, read N- to C-terminus: Small ribosomal subunit protein uS11c (143 aa).

It belongs to the universal ribosomal protein uS11 family. In terms of assembly, part of the 30S ribosomal subunit.

The protein localises to the plastid. The protein resides in the chloroplast. In Saccharum officinarum (Sugarcane), this protein is Small ribosomal subunit protein uS11c.